Consider the following 263-residue polypeptide: Endonuclease 8 (263 aa).

Catalysis depends on Pro2, which acts as the Schiff-base intermediate with DNA. Residue Glu3 is the Proton donor of the active site. Catalysis depends on Lys53, which acts as the Proton donor; for beta-elimination activity. DNA-binding residues include Gln70, Arg125, and Asn169. Residues Lys229–Lys263 form an FPG-type zinc finger. The active-site Proton donor; for delta-elimination activity is Arg253.

It belongs to the FPG family. The cofactor is Zn(2+).

The enzyme catalyses 2'-deoxyribonucleotide-(2'-deoxyribose 5'-phosphate)-2'-deoxyribonucleotide-DNA = a 3'-end 2'-deoxyribonucleotide-(2,3-dehydro-2,3-deoxyribose 5'-phosphate)-DNA + a 5'-end 5'-phospho-2'-deoxyribonucleoside-DNA + H(+). In terms of biological role, involved in base excision repair of DNA damaged by oxidation or by mutagenic agents. Acts as a DNA glycosylase that recognizes and removes damaged bases. Has a preference for oxidized pyrimidines, such as thymine glycol, 5,6-dihydrouracil and 5,6-dihydrothymine. Has AP (apurinic/apyrimidinic) lyase activity and introduces nicks in the DNA strand. Cleaves the DNA backbone by beta-delta elimination to generate a single-strand break at the site of the removed base with both 3'- and 5'-phosphates. This chain is Endonuclease 8, found in Salmonella newport (strain SL254).